Reading from the N-terminus, the 935-residue chain is Bifunctional alpha-galactosidase/sucrose kinase AgaSK (935 aa).

The tract at residues 1–720 (MAIIYNPNKK…EAYQFAFTEL (720 aa)) is alpha-galactosidase. Mg(2+) is bound by residues glutamate 176, glutamate 277, and phenylalanine 280. Substrate is bound by residues 366 to 367 (DD), arginine 443, 476 to 480 (KWDMN), and 518 to 521 (CSGG). Residue aspartate 526 is the Nucleophile of the active site. Substrate is bound at residue aspartate 540. Glutamate 606 functions as the Proton donor/acceptor in the catalytic mechanism. Positions 721–935 (KEAGRLYEKV…VGKDGSVYEQ (215 aa)) are sucrose kinase. ATP contacts are provided by residues 748 to 752 (GGSGS) and alanine 824.

It in the N-terminal section; belongs to the glycosyl hydrolase 36 family. In the C-terminal section; belongs to the uridine kinase family. Homotetramer. Mg(2+) is required as a cofactor.

The enzyme catalyses Hydrolysis of terminal, non-reducing alpha-D-galactose residues in alpha-D-galactosides, including galactose oligosaccharides, galactomannans and galactolipids.. In terms of biological role, bifunctional enzyme with alpha-galactosidase and sucrose kinase activities. Produces sucrose-6-phosphate directly from raffinose. Binds ATP. Phosphorylates sucrose specifically on the C6 position of glucose in the presence of ATP. Hydrolyzes melibiose, raffinose, stachyose and synthetic substrate p-nitrophenyl-alpha-D-galactopyranoside with high activity. Low activity against locust bean gum, guar gum and synthetic substrates xylose alpha-D-4-nitrophenol, glucose alpha-D-4-nitrophenol and o-nitrophenyl-alpha-D-galactopyranoside. The chain is Bifunctional alpha-galactosidase/sucrose kinase AgaSK from Mediterraneibacter gnavus (Ruminococcus gnavus).